The sequence spans 567 residues: MEGSPIPVLTVPTAPYEDQRPTGGGGLRRPTGLFEGQRNYLPNFIQSVLSSIDLRDRQGCTMVVGSDGRYFSRTATEIVVQMAAANGIGRLIIGQNGILSTPAVSCIIRKIKAAGGIILTASHCPGGPGGEFGVKFNVANGGPAPDVVSDKIYQISKTIEEYTICPDLRIDLSRLGRQEFDLENKFKPFRVEIVDPVDIYLNLLRTIFDFNAIKSLLTGPSQLKIRVDAMHGVMGPYVRKVLCDELGAPANSAINCVPLEDFGGQHPDPNLTYATTLLEAMKGGEYGFGAAFDADGDRYMILGQNGFFVSPSDSLAIIAANLSCIPYFRQMGVRGFGRSMPTSMALDRVAKSMKVPVYETPAGWRFFSNLMDSGRCSLCGEESFGTGSDHLREKDGLWAVLVWLSIIAARKQSVEEIVRDHWAKYGRHYYCRVLYEAKSPKATYYIMRDLEALVTDKSFIGQQFAVGSHIYSIAKTDSFEYVDPVDGTVTKKQGLRIIFSDASRLIFRLSSSSGVRATIRLYAESYERDPSGHDQEPQAVLSPLIAIALKISQIHERTGRRGPTVIT.

The tract at residues 1–26 (MEGSPIPVLTVPTAPYEDQRPTGGGG) is disordered. Threonine 120 carries the post-translational modification Phosphothreonine. Serine 122 carries the post-translational modification Phosphoserine.

Belongs to the phosphohexose mutase family. Interacts with DMD/dystrophin; the interaction is direct. Interacts with UTRN/utrophin.

Its subcellular location is the cell junction. The protein localises to the adherens junction. The protein resides in the cytoplasm. It is found in the cytoskeleton. It localises to the cell membrane. Its subcellular location is the sarcolemma. In terms of biological role, component of adherens-type cell-cell and cell-matrix junctions. Has no phosphoglucomutase activity in vitro. The polypeptide is Phosphoglucomutase-like protein 5 (Rattus norvegicus (Rat)).